A 544-amino-acid polypeptide reads, in one-letter code: Chaperonin GroEL (544 aa).

Residues 30-33 (TLGP), Lys-51, 87-91 (DGTTT), Gly-415, and Asp-495 contribute to the ATP site.

It belongs to the chaperonin (HSP60) family. Forms a cylinder of 14 subunits composed of two heptameric rings stacked back-to-back. Interacts with the co-chaperonin GroES.

The protein localises to the cytoplasm. The enzyme catalyses ATP + H2O + a folded polypeptide = ADP + phosphate + an unfolded polypeptide.. In terms of biological role, together with its co-chaperonin GroES, plays an essential role in assisting protein folding. The GroEL-GroES system forms a nano-cage that allows encapsulation of the non-native substrate proteins and provides a physical environment optimized to promote and accelerate protein folding. The protein is Chaperonin GroEL of Neisseria flavescens.